The primary structure comprises 474 residues: 2-succinylbenzoate--CoA ligase (474 aa).

Belongs to the ATP-dependent AMP-binding enzyme family. MenE subfamily.

It catalyses the reaction 2-succinylbenzoate + ATP + CoA = 2-succinylbenzoyl-CoA + AMP + diphosphate. The protein operates within quinol/quinone metabolism; 1,4-dihydroxy-2-naphthoate biosynthesis; 1,4-dihydroxy-2-naphthoate from chorismate: step 5/7. It functions in the pathway quinol/quinone metabolism; menaquinone biosynthesis. Functionally, converts 2-succinylbenzoate (OSB) to 2-succinylbenzoyl-CoA (OSB-CoA). In Staphylococcus epidermidis (strain ATCC 35984 / DSM 28319 / BCRC 17069 / CCUG 31568 / BM 3577 / RP62A), this protein is 2-succinylbenzoate--CoA ligase.